The sequence spans 199 residues: Probable GTP-binding protein EngB (199 aa).

An EngB-type G domain is found at 28 to 199 (DIPEIALAGR…QAWDAILEQI (172 aa)). GTP is bound by residues 36–43 (GRSNVGKS), 63–67 (GKTQL), 81–84 (DVPG), 148–151 (TKAD), and 180–182 (FSS). Mg(2+) contacts are provided by S43 and T65.

The protein belongs to the TRAFAC class TrmE-Era-EngA-EngB-Septin-like GTPase superfamily. EngB GTPase family. Requires Mg(2+) as cofactor.

Necessary for normal cell division and for the maintenance of normal septation. This chain is Probable GTP-binding protein EngB, found in Streptococcus uberis (strain ATCC BAA-854 / 0140J).